Reading from the N-terminus, the 654-residue chain is MTQITEKELKKKYLDLLSQNFDTPEKLATEIINLESILELPKGTEHFVSDLHGEYEAFQHVLRNGSGNVRAKINDIFKERLSTKELNDLTALVYYPEDKLKLIKSDFQSCGQLNVWYITTIEHLIELIKYCSSKYTRSKLRKALPKQYVYIIEELLYKSNEYQNKKSYYETLVNQVIELKQADDLIIGLAYSVQRLVVDHLHVVGDIYDRGPQPDKIMDTLINYHSLDIQWGNHDVLWVGAYAGSKVCLANLLRICARYDNLDIIEDAYGINLRPLLTLAEKYYDADNPAFKPKKRPDKHERLTQREESQITKIHQAIAMIQFKLEIPIIKRRPNFEMEERLVLEKVNYDTNEITVYGNTYPLKDTCFQTVNRDNPAELLPEEEEVMNKLLLSFQQSEKLRRHMSFLMRKGSLYLPYNGNLLIHGCIPVDENGEMESFEIDGHTYSGQELLDVFEYHVRKSFDEKENTDDLSTDLVWYLWTGKYSSLFGKRAMTTFERYFIADKASHKEEKNPYYHLREDVNMVRKMLSDFGLNADEGRIINGHTPVKEINGEDPIKADGKMLVIDGGFSKAYQSTTGIAGYTLLYNSFGMQLVAHQQFNAKEKILSEGIDELSIKRVVDKELQRKKIRDTNIGKDLQAQIDILKMLMHDRYLD.

Positions 288-307 are disordered; the sequence is NPAFKPKKRPDKHERLTQRE. Basic and acidic residues predominate over residues 298–307; it reads DKHERLTQRE.

It belongs to the FBPase class 3 family. The cofactor is Mn(2+).

The catalysed reaction is beta-D-fructose 1,6-bisphosphate + H2O = beta-D-fructose 6-phosphate + phosphate. The protein operates within carbohydrate biosynthesis; gluconeogenesis. This is Fructose-1,6-bisphosphatase class 3 from Staphylococcus aureus (strain MSSA476).